Here is a 359-residue protein sequence, read N- to C-terminus: ATPase ASNA1 homolog (359 aa).

ATP is bound at residue 23–30; it reads KGGVGKTT. Asp63 is a catalytic residue. ATP contacts are provided by Glu252 and Asn279. Zn(2+) contacts are provided by Cys291 and Cys294.

Belongs to the arsA ATPase family. Homodimer.

The protein resides in the cytoplasm. It is found in the endoplasmic reticulum. Its function is as follows. ATPase required for the post-translational delivery of tail-anchored (TA) proteins to the endoplasmic reticulum. Recognizes and selectively binds the transmembrane domain of TA proteins in the cytosol. This complex then targets to the endoplasmic reticulum by membrane-bound receptors, where the tail-anchored protein is released for insertion. This process is regulated by ATP binding and hydrolysis. ATP binding drives the homodimer towards the closed dimer state, facilitating recognition of newly synthesized TA membrane proteins. ATP hydrolysis is required for insertion. Subsequently, the homodimer reverts towards the open dimer state, lowering its affinity for the membrane-bound receptor, and returning it to the cytosol to initiate a new round of targeting. The sequence is that of ATPase ASNA1 homolog from Trypanosoma cruzi (strain CL Brener).